We begin with the raw amino-acid sequence, 290 residues long: Phosphate import ATP-binding protein PstB (290 aa).

Positions 43 to 285 (MSVRNLNVYY…PEHELTEAYI (243 aa)) constitute an ABC transporter domain. Position 75-82 (75-82 (GPSGCGKS)) interacts with ATP.

The protein belongs to the ABC transporter superfamily. Phosphate importer (TC 3.A.1.7) family. As to quaternary structure, the complex is composed of two ATP-binding proteins (PstB), two transmembrane proteins (PstC and PstA) and a solute-binding protein (PstS).

It localises to the cell inner membrane. The enzyme catalyses phosphate(out) + ATP + H2O = ADP + 2 phosphate(in) + H(+). In terms of biological role, part of the ABC transporter complex PstSACB involved in phosphate import. Responsible for energy coupling to the transport system. The protein is Phosphate import ATP-binding protein PstB of Pseudoalteromonas atlantica (strain T6c / ATCC BAA-1087).